Reading from the N-terminus, the 436-residue chain is MRQALPLVTRQGDRIAIVSGLRTPFARQATAFHGIPAVDLGKMVVGELLARSEIPADAIEQLVFGQVVQMPEAPNIAREIVLGTGMNVHTDAYSVSRACATSFQAVANVAESLMAGTIRAGIAGGADSSSVLPIGVSKALARVLVDVNKARTTRQRLTLFSRLRLRDLLPVPPAVAEYSTGLRMGDTAEQMAKTYGITREQQDALAHRSHQRAAQAWAEGKLAEEVMTTYVPPYKNPFAEDNNIRGTSTLADYAKLRPAFDRKHGSVTAANSTPLTDGAAAVILMTESRAKELGLHPLGYLRSYAFTAIDVWQDMLLGPAWSTPLALERAGLTMADLTLFDMHEAFAAQTLANLQLLGSERFAREVLGRAQATGEVDDAKFNVLGGSIAYGHPFAATGARMITQTLHELRRRGGGFGLVTACAAGGLGAAMVLEAE.

Residue Cys-99 is the Acyl-thioester intermediate of the active site. Catalysis depends on proton acceptor residues His-392 and Cys-422.

The protein belongs to the thiolase-like superfamily. Thiolase family. In terms of assembly, heterotetramer of two alpha chains (FadJ) and two beta chains (FadI).

The protein resides in the cytoplasm. The catalysed reaction is an acyl-CoA + acetyl-CoA = a 3-oxoacyl-CoA + CoA. It participates in lipid metabolism; fatty acid beta-oxidation. Its function is as follows. Catalyzes the final step of fatty acid oxidation in which acetyl-CoA is released and the CoA ester of a fatty acid two carbons shorter is formed. The polypeptide is 3-ketoacyl-CoA thiolase (Salmonella schwarzengrund (strain CVM19633)).